Here is a 479-residue protein sequence, read N- to C-terminus: Probable polyamine transporter At3g19553 (479 aa).

A run of 12 helical transmembrane segments spans residues 22-42 (LTLLPLVFLIFYEVSGGPFGV), 53-73 (LLALLGFLIFPLIWSIPEALV), 86-106 (GYVVWISSAFGPFWGFQEGFW), 130-150 (FPVLDHVAARVPALLVITFSL), 160-180 (IVGFSAVVLAVFSLCPFVVMA), 236-256 (ALFGAVLLVMGSYLIPLMAGT), 275-295 (VGMLIGGVWLKGWIQAAAAMS), 304-324 (MSSDAFQLLGMSEIGMLPAFF), 332-352 (TPTISILCSATGVIFLSWMSF), 355-375 (IIEFLNFLYALGMLLEFAAFV), 395-415 (FGVSMLCLPPSLLVILVMVLA), and 420-440 (FLISGVIIVLGFCLYPFLTLV). Positions 454-479 (RPVSGVSSESQLDEEHGDESAASLLP) are disordered.

Belongs to the amino acid-polyamine-organocation (APC) superfamily. Polyamine:cation symporter (PHS) (TC 2.A.3.12) family.

It is found in the cell membrane. Functionally, probable cell membrane polyamine/proton symporter involved in the polyamine uptake in cells. This chain is Probable polyamine transporter At3g19553, found in Arabidopsis thaliana (Mouse-ear cress).